We begin with the raw amino-acid sequence, 724 residues long: Propionyl-CoA carboxylase alpha chain, mitochondrial (724 aa).

Residues Lys-48–Pro-495 enclose the Biotin carboxylation domain. ATP contacts are provided by residues Lys-163, Ser-195–Ile-256, Glu-247, and Asn-282. One can recognise an ATP-grasp domain in the interval Lys-167 to Tyr-364. Mg(2+) is bound by residues Glu-322, Glu-335, and Asn-337. Mn(2+)-binding residues include Glu-322, Glu-335, and Asn-337. The active site involves Arg-339. Phe-395 provides a ligand contact to biotin. Positions Lys-649–Glu-724 constitute a Biotinyl-binding domain. Lys-690 carries the post-translational modification N6-biotinyllysine.

The holoenzyme is a dodecamer composed of 6 alpha subunits and 6 beta subunits. Interacts with sir-2.2 and sir-2.3. Biotin is required as a cofactor. It depends on Mg(2+) as a cofactor. Mn(2+) serves as cofactor. Post-translationally, the biotin cofactor is covalently attached to the C-terminal biotinyl-binding domain and is required for the catalytic activity.

Its subcellular location is the mitochondrion matrix. It catalyses the reaction propanoyl-CoA + hydrogencarbonate + ATP = (S)-methylmalonyl-CoA + ADP + phosphate + H(+). The catalysed reaction is butanoyl-CoA + hydrogencarbonate + ATP = (2S)-ethylmalonyl-CoA + ADP + phosphate + H(+). It participates in metabolic intermediate metabolism; propanoyl-CoA degradation; succinyl-CoA from propanoyl-CoA: step 1/3. Its function is as follows. This is one of the 2 subunits of the biotin-dependent propionyl-CoA carboxylase (PCC), a mitochondrial enzyme involved in the catabolism of odd chain fatty acids, branched-chain amino acids isoleucine, threonine, methionine, and valine and other metabolites. Propionyl-CoA carboxylase catalyzes the carboxylation of propionyl-CoA/propanoyl-CoA to D-methylmalonyl-CoA/(S)-methylmalonyl-CoA. Within the holoenzyme, the alpha subunit catalyzes the ATP-dependent carboxylation of the biotin carried by the biotin carboxyl carrier (BCC) domain, while the beta subunit then transfers the carboxyl group from carboxylated biotin to propionyl-CoA. Propionyl-CoA carboxylase also significantly acts on butyryl-CoA/butanoyl-CoA, which is converted to ethylmalonyl-CoA/(2S)-ethylmalonyl-CoA. Other alternative minor substrates include (2E)-butenoyl-CoA/crotonoyl-CoA. The polypeptide is Propionyl-CoA carboxylase alpha chain, mitochondrial (pcca-1) (Caenorhabditis elegans).